A 323-amino-acid chain; its full sequence is rRNA 2'-O-methyltransferase fibrillarin (323 aa).

A disordered region spans residues methionine 1 to glycine 78. Gly residues-rich tracts occupy residues proline 7 to glycine 44 and glycine 63 to glycine 78. Asymmetric dimethylarginine occurs at positions 8, 17, 23, and 29. Residues threonine 174–threonine 175, glutamate 193–phenylalanine 194, aspartate 218–alanine 219, and aspartate 238–glutamine 241 each bind S-adenosyl-L-methionine. The tract at residues alanine 276–histidine 308 is helical.

It belongs to the methyltransferase superfamily. Fibrillarin family. In terms of assembly, component of box C/D small nucleolar ribonucleoprotein (snoRNP) particles. Part of the small subunit (SSU) processome, composed of more than 70 proteins and the RNA chaperone small nucleolar RNA (snoRNA) U3. By homology to other fibrillarins, some or all of the N-terminal domain arginines are modified to asymmetric dimethylarginine (DMA).

Its subcellular location is the nucleus. The protein resides in the nucleolus. It is found in the nucleoplasm. It carries out the reaction L-glutaminyl-[histone H2A] + S-adenosyl-L-methionine = N(5)-methyl-L-glutaminyl-[histone H2A] + S-adenosyl-L-homocysteine + H(+). The catalysed reaction is a ribonucleotide in rRNA + S-adenosyl-L-methionine = a 2'-O-methylribonucleotide in rRNA + S-adenosyl-L-homocysteine + H(+). It catalyses the reaction a ribonucleotide in U6 snRNA + S-adenosyl-L-methionine = a 2'-O-methylribonucleotide in U6 snRNA + S-adenosyl-L-homocysteine + H(+). S-adenosyl-L-methionine-dependent methyltransferase that has the ability to methylate both RNAs and proteins. Involved in pre-rRNA processing by catalyzing the site-specific 2'-hydroxyl methylation of ribose moieties in pre-ribosomal RNA. Probably catalyzes 2'-O-methylation of U6 snRNAs in box C/D RNP complexes. U6 snRNA 2'-O-methylation is required for mRNA splicing fidelity. Also acts as a protein methyltransferase by mediating methylation of 'Gln-105' of histone H2A (H2AQ104me), a modification that impairs binding of the FACT complex and is specifically present at 35S ribosomal DNA locus. Part of the small subunit (SSU) processome, first precursor of the small eukaryotic ribosomal subunit. During the assembly of the SSU processome in the nucleolus, many ribosome biogenesis factors, an RNA chaperone and ribosomal proteins associate with the nascent pre-rRNA and work in concert to generate RNA folding, modifications, rearrangements and cleavage as well as targeted degradation of pre-ribosomal RNA by the RNA exosome. The chain is rRNA 2'-O-methyltransferase fibrillarin (fbl) from Xenopus laevis (African clawed frog).